The primary structure comprises 417 residues: D-amino acid dehydrogenase (417 aa).

Residue 3–17 participates in FAD binding; that stretch reads VVILGSGVVGVSTAW.

This sequence belongs to the DadA oxidoreductase family. FAD is required as a cofactor.

It carries out the reaction a D-alpha-amino acid + A + H2O = a 2-oxocarboxylate + AH2 + NH4(+). It participates in amino-acid degradation; D-alanine degradation; NH(3) and pyruvate from D-alanine: step 1/1. In terms of biological role, oxidative deamination of D-amino acids. In Pectobacterium carotovorum subsp. carotovorum (strain PC1), this protein is D-amino acid dehydrogenase.